Here is a 144-residue protein sequence, read N- to C-terminus: Universal stress protein A (144 aa).

Belongs to the universal stress protein A family. In terms of assembly, homodimer.

The protein localises to the cytoplasm. Required for resistance to DNA-damaging agents. This Escherichia coli O6:H1 (strain CFT073 / ATCC 700928 / UPEC) protein is Universal stress protein A (uspA).